Consider the following 92-residue polypeptide: Putative regulatory protein Tpet_0986 (92 aa).

Belongs to the RemA family.

The polypeptide is Putative regulatory protein Tpet_0986 (Thermotoga petrophila (strain ATCC BAA-488 / DSM 13995 / JCM 10881 / RKU-1)).